A 96-amino-acid chain; its full sequence is Putative translation initiation factor IF-1, chloroplastic (96 aa).

The 40-residue stretch at Ile18–His57 folds into the S1-like domain.

It belongs to the IF-1 family. In terms of assembly, component of the 30S ribosomal translation pre-initiation complex which assembles on the 30S ribosome in the order IF-2 and IF-3, IF-1 and N-formylmethionyl-tRNA(fMet); mRNA recruitment can occur at any time during PIC assembly.

It localises to the plastid. The protein localises to the chloroplast. Its function is as follows. One of the essential components for the initiation of protein synthesis. Stabilizes the binding of IF-2 and IF-3 on the 30S subunit to which N-formylmethionyl-tRNA(fMet) subsequently binds. Helps modulate mRNA selection, yielding the 30S pre-initiation complex (PIC). Upon addition of the 50S ribosomal subunit IF-1, IF-2 and IF-3 are released leaving the mature 70S translation initiation complex. In Nicotiana tabacum (Common tobacco), this protein is Putative translation initiation factor IF-1, chloroplastic (infA).